A 1284-amino-acid polypeptide reads, in one-letter code: Neuronal cell adhesion molecule (1284 aa).

A signal peptide spans 1 to 24 (MMKEKSISASKASLVFFLCQMISA). Topologically, residues 25-1143 (LDVPLDSKLL…ASRQVDIATQ (1119 aa)) are extracellular. Ig-like C2-type domains follow at residues 41–129 (PTIT…AAIS), 136–230 (PSRS…QPIS), 243–332 (PPVL…ISVT), 337–424 (PYWI…AFVN), 430–517 (PRIL…VQLE), and 521–608 (PTMI…AVLT). Cystine bridges form between Cys-63-Cys-118 and Cys-162-Cys-213. The N-linked (GlcNAc...) asparagine glycan is linked to Asn-78. Residues Asn-218 and Asn-290 are each glycosylated (N-linked (GlcNAc...) asparagine). Intrachain disulfides connect Cys-268-Cys-316 and Cys-358-Cys-408. N-linked (GlcNAc...) asparagine glycans are attached at residues Asn-409, Asn-483, Asn-576, Asn-581, Asn-595, and Asn-692. 2 disulfide bridges follow: Cys-452–Cys-501 and Cys-543–Cys-592. 5 Fibronectin type-III domains span residues 625 to 720 (PPLD…TKSA), 725 to 819 (NPSN…SGED), 824 to 926 (APGN…TPEG), 930 to 1026 (PPSF…IMDE), and 1040 to 1132 (QPLY…TGPA). The segment covering 707–731 (QPSEPSEQYLTKSANPDENPSNVQG) has biased composition (polar residues). The tract at residues 707–732 (QPSEPSEQYLTKSANPDENPSNVQGI) is disordered. N-linked (GlcNAc...) asparagine glycosylation is found at Asn-778, Asn-834, Asn-885, Asn-969, Asn-985, Asn-995, Asn-1048, Asn-1059, and Asn-1091. The helical transmembrane segment at 1144 to 1166 (GWFIGLMCAVALLILILLIVCFI) threads the bilayer. Topologically, residues 1167–1284 (RRNKGGKYPV…SPVNAMNSFV (118 aa)) are cytoplasmic. Composition is skewed to basic and acidic residues over residues 1175-1195 (PVKE…KEDD), 1202-1212 (RSLESDAEDHK), and 1221-1230 (PSDRTVKKED). The interval 1175–1284 (PVKEKEDAHA…SPVNAMNSFV (110 aa)) is disordered. Residues 1268-1284 (NESSEAPSPVNAMNSFV) show a composition bias toward polar residues.

Belongs to the immunoglobulin superfamily. L1/neurofascin/NgCAM family. In terms of assembly, heterodimer of an alpha and a beta chain. As to expression, retina and developing brain.

It is found in the cell membrane. Functionally, this protein is a cell adhesion molecule involved in neuron-neuron adhesion, neurite fasciculation, outgrowth of neurites, etc. Specifically involved in the development of optic fibres in the retina. This Gallus gallus (Chicken) protein is Neuronal cell adhesion molecule.